Consider the following 1851-residue polypeptide: MGGPKKEENPPGGGPTSLFILTEDNPIRKYTRFIIEWPPFEYAVLLTIIANCVVLALEEHLPGGDKTVLAQKLEKTEAYFLCIFCVEASLKILALGLVLHKHSYLRNIWNIMDFFVVVTGFMTQYPQIGPEVDLRTLRAIRVLRPLKLVSGIPSLQVVLKSIIKAMAPLLQIGLLVLFAIVIFAIIGLEFYSGALHKTCYSLEDPNKLVKEGESETPCNTDNILEKATGSFVCNNTTSMCLEKWEGPNSGITSFDNIGFAMLTVFQCITMEGWTAILYWTNDALGSAFNWIYFVPLIVIGSFFMLNLVLGVLSGEFSNERNRVERRMEFQKCRFRAMFQTAMVSYLDWITQAEEVILAEERTTEEEKMHIMEARRRNAAKRKKLKSLGKSKSTDTEEEEAEEDYGDDGYLKTRSKPQGSCTGFWRAEKRFRFWIRHTVKTQWFYWFVIVLVFLNTVCVAVEHYGQPSFLTEFLYYAEFIFLGLFMSEMFIKMYALGPRIYFESSFNRFDCVVISGSIFEVIWSEVKGGSFGLSVLRALRLLRIFKVTKYWSSLRNLVISLLNSMRSIISLLFLLFLFILIFALLGMQLFGGQFNLPGGTPETNFNTFPIALLTVFQILTGEDWNEVMYQGIISQGGAQKGMIYSIYFIVLVLFGNYTLLNVFLAIAVDNLANAQELTAAEEEQVEEDKEKQLQELEKEMEALQADGVHVENGDGAVAPSKSKGKKKEEEKKEEEEVTEGPKPMLPYSSMFILSPTNPIRRGAHWVVNLPYFDFFIMVVISMSSIALAAEDPVRENSRRNKILNYFDYAFTGVFTIEMLLKIVDLGVILHPGSYLREFWNIMDAVVVICAAVSFGFDMSGSSAGQNLSTIKSLRVLRVLRPLKTIKRVPKLKAVFDCVVNSLKNVVNILIVYILFQFIFSVIGVQLFNGKFFYCTDESKHTSAECQGSYFKYEEDELLPKQELRVWKPRAFHYDNVAAAMLTLFAVQTGEGWPQVLQHSMAATYEDRGPIQNFRIEMSIFYIVYFIVFPFFFVNIFVALIIITFQEQGEAELQDGEIDKNQKSCIDFTIGARPLERYMPKNRNTFKYKVWRIVVSTPFEYFIMMLIVFNTLLLMMKYHNQGDMYEKSLKYINMGFTGMFSVETVLKIIGFGVKNFFKDPWNIFDLITVLGSIVDALWMEFGHDDSNSINVGFLRLFRAARLIKLLRQGYTIRILLWTFVQSFKALPYVCLLIAMLFFIYAIIGMQVFGNIKLGTVENSITRHNNFQSFIQGVMLLFRCATGEAWPNIMLACLKGKACDDDAEKAPGEYCGSTLAYAYFVSFIFFCSFLMLNLFVAVIMDNFDYLTRDSSILGAHHLDEFVRIWAEYDPNATGKIHYTEMYDMLKNMDPPLGFGNKCPNRLAYKKLIRMNMPLDDELRVQFTTTLFALIRENLSIKMRAPEEMDQADMELRETITNIWPLQAKKMLNLLVPPSDQLNKGKLSVGKIYAGFLILESWRSTRFGQLDSGMPMLELQDASRHPSQESLTGADAGHLHPGHSYMNGHRRSPSLRHNGSPLARSPSPRRRGHQYIHHDIGFSDTVSNVVEMVKETRHPRHGNSHPRYPRGSWSASTSPARSPSPSRYGGHLSRSKRTQLPYPTYGTTSLCQRSRSPSPARLQEMRERDRLGYGIDMGVTHVQHSYPTLASRRAGIGRRLPPTPSKPSTLQLKPTNINFPKLNASPTHTHHSTPHSVHSLPHHRDLLRDPRDMYYSSRERERDRERLRDRDRDRDRDRLHEYDLRYEYRDRERELYERERDREREVERERLEYIAPLSFEQALAMGRTGRVLPSPVLNGFKPKSGLNPRHSDSDEEDWC.

Residues 1-38 (MGGPKKEENPPGGGPTSLFILTEDNPIRKYTRFIIEWP) are Cytoplasmic-facing. Residues 25–316 (NPIRKYTRFI…LVLGVLSGEF (292 aa)) form an I repeat. Residues 39 to 57 (PFEYAVLLTIIANCVVLAL) traverse the membrane as a helical segment. Residues 58–75 (EEHLPGGDKTVLAQKLEK) are Extracellular-facing. Residues 76–95 (TEAYFLCIFCVEASLKILAL) traverse the membrane as a helical segment. The Cytoplasmic portion of the chain corresponds to 96–107 (GLVLHKHSYLRN). A helical transmembrane segment spans residues 108–128 (IWNIMDFFVVVTGFMTQYPQI). Topologically, residues 129–133 (GPEVD) are extracellular. Residues 134-152 (LRTLRAIRVLRPLKLVSGI) traverse the membrane as a helical segment. Residues 153 to 171 (PSLQVVLKSIIKAMAPLLQ) lie on the Cytoplasmic side of the membrane. A helical transmembrane segment spans residues 172–191 (IGLLVLFAIVIFAIIGLEFY). Over 192–288 (SGALHKTCYS…WTNDALGSAF (97 aa)) the chain is Extracellular. 2 N-linked (GlcNAc...) asparagine glycosylation sites follow: Asn-234 and Asn-235. The chain crosses the membrane as a helical span at residues 289 to 313 (NWIYFVPLIVIGSFFMLNLVLGVLS). The Cytoplasmic portion of the chain corresponds to 314–441 (GEFSNERNRV…FWIRHTVKTQ (128 aa)). Residues 381–417 (RKKLKSLGKSKSTDTEEEEAEEDYGDDGYLKTRSKPQ) are disordered. Residues 395–406 (TEEEEAEEDYGD) show a composition bias toward acidic residues. Residues 427 to 670 (EKRFRFWIRH…VFLAIAVDNL (244 aa)) form an II repeat. The chain crosses the membrane as a helical span at residues 442–460 (WFYWFVIVLVFLNTVCVAV). Topologically, residues 461 to 475 (EHYGQPSFLTEFLYY) are extracellular. Residues 476–495 (AEFIFLGLFMSEMFIKMYAL) traverse the membrane as a helical segment. Over 496-503 (GPRIYFES) the chain is Cytoplasmic. The chain crosses the membrane as a helical span at residues 504-522 (SFNRFDCVVISGSIFEVIW). Over 523 to 531 (SEVKGGSFG) the chain is Extracellular. The chain crosses the membrane as a helical span at residues 532–550 (LSVLRALRLLRIFKVTKYW). Residues 551–569 (SSLRNLVISLLNSMRSIIS) lie on the Cytoplasmic side of the membrane. A helical transmembrane segment spans residues 570–589 (LLFLLFLFILIFALLGMQLF). At 590–642 (GGQFNLPGGTPETNFNTFPIALLTVFQILTGEDWNEVMYQGIISQGGAQKGMI) the chain is on the extracellular side. A helical transmembrane segment spans residues 643–667 (YSIYFIVLVLFGNYTLLNVFLAIAV). Topologically, residues 668 to 767 (DNLANAQELT…IRRGAHWVVN (100 aa)) are cytoplasmic. The segment at 710-741 (ENGDGAVAPSKSKGKKKEEEKKEEEEVTEGPK) is disordered. Residues 762–1049 (AHWVVNLPYF…IITFQEQGEA (288 aa)) form an III repeat. The chain crosses the membrane as a helical span at residues 768 to 786 (LPYFDFFIMVVISMSSIAL). Topologically, residues 787–802 (AAEDPVRENSRRNKIL) are extracellular. A helical membrane pass occupies residues 803 to 822 (NYFDYAFTGVFTIEMLLKIV). Over 823–834 (DLGVILHPGSYL) the chain is Cytoplasmic. A helical membrane pass occupies residues 835 to 853 (REFWNIMDAVVVICAAVSF). At 854–866 (GFDMSGSSAGQNL) the chain is on the extracellular side. An N-linked (GlcNAc...) asparagine glycan is attached at Asn-865. The helical transmembrane segment at 867–885 (STIKSLRVLRVLRPLKTIK) threads the bilayer. Over 886-904 (RVPKLKAVFDCVVNSLKNV) the chain is Cytoplasmic. A helical transmembrane segment spans residues 905–924 (VNILIVYILFQFIFSVIGVQ). Residues 925–1013 (LFNGKFFYCT…EDRGPIQNFR (89 aa)) are Extracellular-facing. Residues 1014 to 1038 (IEMSIFYIVYFIVFPFFFVNIFVAL) traverse the membrane as a helical segment. Residues 1039–1093 (IIITFQEQGEAELQDGEIDKNQKSCIDFTIGARPLERYMPKNRNTFKYKVWRIVV) lie on the Cytoplasmic side of the membrane. The IV repeat unit spans residues 1086–1347 (YKVWRIVVST…DNFDYLTRDS (262 aa)). A helical membrane pass occupies residues 1094–1122 (STPFEYFIMMLIVFNTLLLMMKYHNQGDM). Residues 1123–1127 (YEKSL) are Extracellular-facing. The helical transmembrane segment at 1128–1147 (KYINMGFTGMFSVETVLKII) threads the bilayer. Topologically, residues 1148–1155 (GFGVKNFF) are cytoplasmic. A helical membrane pass occupies residues 1156-1174 (KDPWNIFDLITVLGSIVDA). Topologically, residues 1175 to 1184 (LWMEFGHDDS) are extracellular. Residues 1185–1203 (NSINVGFLRLFRAARLIKL) traverse the membrane as a helical segment. Topologically, residues 1204-1222 (LRQGYTIRILLWTFVQSFK) are cytoplasmic. The helical transmembrane segment at 1223–1242 (ALPYVCLLIAMLFFIYAIIG) threads the bilayer. Residues 1243–1308 (MQVFGNIKLG…DAEKAPGEYC (66 aa)) are Extracellular-facing. Residues 1306–1348 (EYCGSTLAYAYFVSFIFFCSFLMLNLFVAVIMDNFDYLTRDSS) are phenylalkylamine binding. Residues 1309 to 1333 (GSTLAYAYFVSFIFFCSFLMLNLFV) traverse the membrane as a helical segment. Topologically, residues 1334-1851 (AVIMDNFDYL…HSDSDEEDWC (518 aa)) are cytoplasmic. Residues 1353–1388 (HHLDEFVRIWAEYDPNATGKIHYTEMYDMLKNMDPP) enclose the EF-hand domain. 5 residues coordinate Ca(2+): Asp-1366, Asn-1368, Thr-1370, Lys-1372, and Glu-1377. Disordered regions lie at residues 1513–1572 (DASR…HHDI), 1588–1653 (TRHP…SPAR), 1685–1764 (RAGI…DRDR), and 1823–1851 (VLPSPVLNGFKPKSGLNPRHSDSDEEDWC). The span at 1589-1600 (RHPRHGNSHPRY) shows a compositional bias: basic residues. Positions 1604–1619 (SWSASTSPARSPSPSR) are enriched in low complexity. Polar residues-rich tracts occupy residues 1637-1649 (YGTTSLCQRSRSP) and 1698-1710 (KPSTLQLKPTNIN). Basic and acidic residues predominate over residues 1734–1764 (HHRDLLRDPRDMYYSSRERERDRERLRDRDR).

It belongs to the calcium channel alpha-1 subunit (TC 1.A.1.11) family. Expressed widely in the embryonic nervous system.

Its subcellular location is the membrane. Voltage-sensitive calcium channels (VSCC) mediate the entry of calcium ions into excitable cells and are also involved in a variety of calcium-dependent processes, including muscle contraction, neurotransmitter release, gene expression, cell motility, cell division and cell death. Probably encodes a dihydropyridine-insensitive current. Vital for survival to adulthood. In Drosophila melanogaster (Fruit fly), this protein is Voltage-dependent calcium channel type A subunit alpha-1 (cac).